The sequence spans 349 residues: DNA polymerase IV (349 aa).

A UmuC domain is found at 4 to 185 (IIHIDCDCFY…LPVAKLHGVG (182 aa)). Residues Asp8 and Asp103 each coordinate Mg(2+). Residue Glu104 is part of the active site.

The protein belongs to the DNA polymerase type-Y family. Monomer. Mg(2+) is required as a cofactor.

The protein localises to the cytoplasm. The enzyme catalyses DNA(n) + a 2'-deoxyribonucleoside 5'-triphosphate = DNA(n+1) + diphosphate. Its function is as follows. Poorly processive, error-prone DNA polymerase involved in untargeted mutagenesis. Copies undamaged DNA at stalled replication forks, which arise in vivo from mismatched or misaligned primer ends. These misaligned primers can be extended by PolIV. Exhibits no 3'-5' exonuclease (proofreading) activity. May be involved in translesional synthesis, in conjunction with the beta clamp from PolIII. The protein is DNA polymerase IV of Pseudomonas aeruginosa (strain UCBPP-PA14).